Consider the following 160-residue polypeptide: Cyanate hydratase (160 aa).

Active-site residues include arginine 100, glutamate 103, and serine 126.

It belongs to the cyanase family.

It carries out the reaction cyanate + hydrogencarbonate + 3 H(+) = NH4(+) + 2 CO2. Catalyzes the reaction of cyanate with bicarbonate to produce ammonia and carbon dioxide. This chain is Cyanate hydratase, found in Penicillium rubens (strain ATCC 28089 / DSM 1075 / NRRL 1951 / Wisconsin 54-1255) (Penicillium chrysogenum).